The sequence spans 601 residues: Elongation factor 4 (601 aa).

In terms of domain architecture, tr-type G spans 5–187 (DKIRNFSIIA…SIVKDLPAPQ (183 aa)). GTP is bound by residues 17–22 (DHGKST) and 134–137 (NKVD).

Belongs to the TRAFAC class translation factor GTPase superfamily. Classic translation factor GTPase family. LepA subfamily.

It localises to the cell inner membrane. The catalysed reaction is GTP + H2O = GDP + phosphate + H(+). Functionally, required for accurate and efficient protein synthesis under certain stress conditions. May act as a fidelity factor of the translation reaction, by catalyzing a one-codon backward translocation of tRNAs on improperly translocated ribosomes. Back-translocation proceeds from a post-translocation (POST) complex to a pre-translocation (PRE) complex, thus giving elongation factor G a second chance to translocate the tRNAs correctly. Binds to ribosomes in a GTP-dependent manner. This is Elongation factor 4 from Maridesulfovibrio salexigens (strain ATCC 14822 / DSM 2638 / NCIMB 8403 / VKM B-1763) (Desulfovibrio salexigens).